The primary structure comprises 39 residues: Photosystem II reaction center protein L (39 aa).

A helical transmembrane segment spans residues 18-38; that stretch reads SLYLGLLLVFVMGILFSSYFF.

The protein belongs to the PsbL family. As to quaternary structure, PSII is composed of 1 copy each of membrane proteins PsbA, PsbB, PsbC, PsbD, PsbE, PsbF, PsbH, PsbI, PsbJ, PsbK, PsbL, PsbM, PsbT, PsbX, PsbY, Psb30/Ycf12, peripheral proteins PsbO, CyanoQ (PsbQ), PsbU, PsbV and a large number of cofactors. It forms dimeric complexes.

It localises to the cellular thylakoid membrane. One of the components of the core complex of photosystem II (PSII). PSII is a light-driven water:plastoquinone oxidoreductase that uses light energy to abstract electrons from H(2)O, generating O(2) and a proton gradient subsequently used for ATP formation. It consists of a core antenna complex that captures photons, and an electron transfer chain that converts photonic excitation into a charge separation. This subunit is found at the monomer-monomer interface and is required for correct PSII assembly and/or dimerization. The polypeptide is Photosystem II reaction center protein L (Prochlorococcus marinus (strain NATL2A)).